Consider the following 491-residue polypeptide: Galactose-1-phosphate uridylyltransferase (491 aa).

The protein belongs to the galactose-1-phosphate uridylyltransferase type 2 family.

It is found in the cytoplasm. It carries out the reaction alpha-D-galactose 1-phosphate + UDP-alpha-D-glucose = alpha-D-glucose 1-phosphate + UDP-alpha-D-galactose. It participates in carbohydrate metabolism; galactose metabolism. This chain is Galactose-1-phosphate uridylyltransferase (galT), found in Streptococcus mutans serotype c (strain ATCC 700610 / UA159).